We begin with the raw amino-acid sequence, 470 residues long: 6-phospho-beta-galactosidase (470 aa).

D-galactose 6-phosphate-binding residues include glutamine 19, histidine 116, asparagine 159, glutamate 160, and asparagine 297. Glutamate 160 (proton donor) is an active-site residue. Glutamate 375 acts as the Nucleophile in catalysis. Serine 430, tryptophan 431, lysine 437, and tyrosine 439 together coordinate D-galactose 6-phosphate.

The protein belongs to the glycosyl hydrolase 1 family.

It catalyses the reaction a 6-phospho-beta-D-galactoside + H2O = D-galactose 6-phosphate + an alcohol. The protein operates within carbohydrate metabolism; lactose degradation; D-galactose 6-phosphate and beta-D-glucose from lactose 6-phosphate: step 1/1. This Staphylococcus aureus (strain Mu3 / ATCC 700698) protein is 6-phospho-beta-galactosidase.